The primary structure comprises 302 residues: Putative fructose-bisphosphate aldolase (302 aa).

D86 (proton donor) is an active-site residue. Zn(2+) is bound by residues H87, D116, E146, and H192. Position 193 (G193) interacts with dihydroxyacetone phosphate. H223 is a binding site for Zn(2+). Dihydroxyacetone phosphate-binding positions include 224 to 226 (GAD) and 245 to 248 (NVNR).

This sequence belongs to the class II fructose-bisphosphate aldolase family. As to quaternary structure, homodimer. It depends on Zn(2+) as a cofactor.

The enzyme catalyses beta-D-fructose 1,6-bisphosphate = D-glyceraldehyde 3-phosphate + dihydroxyacetone phosphate. It participates in carbohydrate degradation; glycolysis; D-glyceraldehyde 3-phosphate and glycerone phosphate from D-glucose: step 4/4. In terms of biological role, catalyzes the aldol condensation of dihydroxyacetone phosphate (DHAP or glycerone-phosphate) with glyceraldehyde 3-phosphate (G3P) to form fructose 1,6-bisphosphate (FBP) in gluconeogenesis and the reverse reaction in glycolysis. The protein is Putative fructose-bisphosphate aldolase of Coccidioides immitis (strain RS) (Valley fever fungus).